Consider the following 268-residue polypeptide: Tropinone reductase homolog At2g29170 (268 aa).

Position 22–46 (22–46 (LVTGGSKGLGEAVVEELAMLGARVH)) interacts with NADP(+). Ser155 serves as a coordination point for substrate. Residue Tyr168 is the Proton acceptor of the active site.

It belongs to the short-chain dehydrogenases/reductases (SDR) family. SDR65C subfamily.

This chain is Tropinone reductase homolog At2g29170, found in Arabidopsis thaliana (Mouse-ear cress).